Reading from the N-terminus, the 158-residue chain is Small ribosomal subunit protein uS7 (158 aa).

It belongs to the universal ribosomal protein uS7 family. In terms of assembly, part of the 30S ribosomal subunit. Contacts proteins S9 and S11.

Its function is as follows. One of the primary rRNA binding proteins, it binds directly to 16S rRNA where it nucleates assembly of the head domain of the 30S subunit. Is located at the subunit interface close to the decoding center, probably blocks exit of the E-site tRNA. The chain is Small ribosomal subunit protein uS7 from Gluconacetobacter diazotrophicus (strain ATCC 49037 / DSM 5601 / CCUG 37298 / CIP 103539 / LMG 7603 / PAl5).